A 213-amino-acid polypeptide reads, in one-letter code: MTYWTLGVLAVGLGADAFSMALGIGMEGVRRRDAFMLGLVVALFHIFMPWFGILAGSALGLVVGRLASFIGAAVLFFLGGRMIYHAWKEKREGPAFPVSVPRRRGNGSGGGAIVGAGAIVGGRLFAPTRWELVVIGAAVSMDALSVGFSLGTVGAQLLPTVLTFGVVAGIMTVAGCRIGQQVSRMLGATAQLAGGLILLGIGIKLLLGSASPG.

7 consecutive transmembrane segments (helical) span residues 6-26 (LGVLAVGLGADAFSMALGIGM), 34-54 (AFMLGLVVALFHIFMPWFGIL), 58-78 (ALGLVVGRLASFIGAAVLFFL), 107-127 (GSGGGAIVGAGAIVGGRLFAP), 132-152 (LVVIGAAVSMDALSVGFSLGT), 153-173 (VGAQLLPTVLTFGVVAGIMTV), and 192-212 (LAGGLILLGIGIKLLLGSASP).

It belongs to the MntP (TC 9.B.29) family.

Its subcellular location is the cell membrane. Its function is as follows. Probably functions as a manganese efflux pump. This Heliobacterium modesticaldum (strain ATCC 51547 / Ice1) protein is Putative manganese efflux pump MntP.